The sequence spans 523 residues: Putative oxidoreductase TDA3 (523 aa).

The segment covering 157–172 has biased composition (low complexity); the sequence is NSSLSSSGSSLKNDSA. A disordered region spans residues 157–189; that stretch reads NSSLSSSGSSLKNDSASNEEEGSDIHVSSSVPS. Phosphoserine is present on residues Ser-189, Ser-204, and Ser-306.

This sequence belongs to the TDA3 family. In terms of assembly, interacts with BTN2.

The protein resides in the cytoplasm. It localises to the late endosome. In terms of biological role, putative oxidoreductase that negatively regulates the retrieval of cargo from late endosomes to the Golgi. Regulates YIF1 and KEX2 localization. Required for fast DNA replication. The chain is Putative oxidoreductase TDA3 (TDA3) from Saccharomyces cerevisiae (strain ATCC 204508 / S288c) (Baker's yeast).